Consider the following 96-residue polypeptide: Co-chaperonin GroES (96 aa).

The protein belongs to the GroES chaperonin family. In terms of assembly, heptamer of 7 subunits arranged in a ring. Interacts with the chaperonin GroEL.

It is found in the cytoplasm. Together with the chaperonin GroEL, plays an essential role in assisting protein folding. The GroEL-GroES system forms a nano-cage that allows encapsulation of the non-native substrate proteins and provides a physical environment optimized to promote and accelerate protein folding. GroES binds to the apical surface of the GroEL ring, thereby capping the opening of the GroEL channel. This chain is Co-chaperonin GroES, found in Shewanella oneidensis (strain ATCC 700550 / JCM 31522 / CIP 106686 / LMG 19005 / NCIMB 14063 / MR-1).